A 445-amino-acid chain; its full sequence is UDP-N-acetylmuramoylalanine--D-glutamate ligase (445 aa).

ATP is bound at residue 117 to 123 (GSNGKTT).

This sequence belongs to the MurCDEF family.

The protein localises to the cytoplasm. The catalysed reaction is UDP-N-acetyl-alpha-D-muramoyl-L-alanine + D-glutamate + ATP = UDP-N-acetyl-alpha-D-muramoyl-L-alanyl-D-glutamate + ADP + phosphate + H(+). The protein operates within cell wall biogenesis; peptidoglycan biosynthesis. Cell wall formation. Catalyzes the addition of glutamate to the nucleotide precursor UDP-N-acetylmuramoyl-L-alanine (UMA). The chain is UDP-N-acetylmuramoylalanine--D-glutamate ligase from Neisseria meningitidis serogroup A / serotype 4A (strain DSM 15465 / Z2491).